A 210-amino-acid chain; its full sequence is Thymidylate kinase (210 aa).

11–18 (GGEGAGKT) serves as a coordination point for ATP.

This sequence belongs to the thymidylate kinase family.

It carries out the reaction dTMP + ATP = dTDP + ADP. In terms of biological role, phosphorylation of dTMP to form dTDP in both de novo and salvage pathways of dTTP synthesis. The protein is Thymidylate kinase (tmk) of Halalkalibacterium halodurans (strain ATCC BAA-125 / DSM 18197 / FERM 7344 / JCM 9153 / C-125) (Bacillus halodurans).